The primary structure comprises 400 residues: Large envelope protein (400 aa).

Position 1 is an N-acetylmethionine (methionine 1). Disordered regions lie at residues 1-50 (MGGW…PHKD) and 84-116 (ILTS…RDTH). A lipid anchor (N-myristoyl glycine; by host) is attached at glycine 2. Residues 2 to 119 (GGWSSKPRKG…PPLRDTHPQA (118 aa)) form a pre-S1 region. A pre-S region spans residues 2 to 174 (GGWSSKPRKG…LSTTGDPVPN (173 aa)). Topologically, residues 2–181 (GGWSSKPRKG…VPNMENIASG (180 aa)) are virion surface; in external conformation. Topologically, residues 2 to 253 (GGWSSKPRKG…PGYRWMYLRR (252 aa)) are intravirion; in internal conformation. Residue tryptophan 4 is glycosylated (N-linked (GlcNAc...) asparagine). A compositionally biased stretch (polar residues) spans 96 to 106 (STNRQSGRQPT). Residues 120–174 (MQWNSTTFHQTLQDPRVRALYLPAGGSSSGTVSPAQNTVSAISSILSTTGDPVPN) form a pre-S2 region. The chain crosses the membrane as a helical span at residues 182-202 (LLGPLLVLQAGFFSLTKILTI). Topologically, residues 203-253 (PQSLDSWWTSLSFLGGTPVCLGQNSQSPISSHSPTCCPPICPGYRWMYLRR) are intravirion; in external conformation. A helical transmembrane segment spans residues 254-274 (FIIXLCILLLCLIFLLVLLDY). Topologically, residues 275–348 (QGMLPVCPLI…WASVRFSWLS (74 aa)) are virion surface. N-linked (GlcNAc...) asparagine; by host glycosylation is present at asparagine 320. A helical transmembrane segment spans residues 349–369 (LLVPFVQWFVGLSPTVWLSVI). Residues 370-375 (WMMWYW) are Intravirion-facing. Residues 376-398 (GPSLYNILSPFMPLLPIFFCLWV) traverse the membrane as a helical segment. At 399-400 (YI) the chain is on the virion surface side.

Belongs to the orthohepadnavirus major surface antigen family. As to quaternary structure, interacts (via its myristoylated pre-S1 region) with the host SLC10A1/NTCP; this interaction is essential for viral entry. In terms of assembly, in its internal form (Li-HBsAg), interacts with the capsid protein and with the isoform S. Interacts with host chaperone CANX. Associates with host chaperone CANX through its pre-S2 N glycan; this association may be essential for isoform M proper secretion. As to quaternary structure, interacts with isoform L. Interacts with the antigens of satellite virus HDV (HDVAgs); this interaction is required for encapsidation of HDV genomic RNA. In terms of processing, isoform M is N-terminally acetylated by host at a ratio of 90%, and N-glycosylated by host at the pre-S2 region. Post-translationally, myristoylated; this modification is essential for its interaction with the host protein SLC10A1/NTCP.

The protein resides in the virion membrane. In terms of biological role, the large envelope protein exists in two topological conformations, one which is termed 'external' or Le-HBsAg and the other 'internal' or Li-HBsAg. In its external conformation the protein attaches the virus to cell receptors and thereby initiating infection. This interaction determines the species specificity and liver tropism. This attachment induces virion internalization predominantly through caveolin-mediated endocytosis. The large envelope protein also assures fusion between virion membrane and endosomal membrane. In its internal conformation the protein plays a role in virion morphogenesis and mediates the contact with the nucleocapsid like a matrix protein. The middle envelope protein plays an important role in the budding of the virion. It is involved in the induction of budding in a nucleocapsid independent way. In this process the majority of envelope proteins bud to form subviral lipoprotein particles of 22 nm of diameter that do not contain a nucleocapsid. The polypeptide is Large envelope protein (Hepatitis B virus genotype B1 (isolate Japan/Ry30/2002) (HBV-B)).